Reading from the N-terminus, the 68-residue chain is UPF0337 protein RB10934 (68 aa).

Belongs to the UPF0337 (CsbD) family.

This chain is UPF0337 protein RB10934, found in Rhodopirellula baltica (strain DSM 10527 / NCIMB 13988 / SH1).